We begin with the raw amino-acid sequence, 51 residues long: Large ribosomal subunit protein bL33 (51 aa).

Residues 1 to 23 are disordered; that stretch reads MRDKIKLESSAGTGHFYTTTKNK. The span at 10-20 shows a compositional bias: polar residues; the sequence is SAGTGHFYTTT.

This sequence belongs to the bacterial ribosomal protein bL33 family.

This is Large ribosomal subunit protein bL33 from Chromobacterium violaceum (strain ATCC 12472 / DSM 30191 / JCM 1249 / CCUG 213 / NBRC 12614 / NCIMB 9131 / NCTC 9757 / MK).